The primary structure comprises 369 residues: MRFDGESDYRHGSPEILGVLVTNLGTPDAPTPKALRRYLKEFLWDPRVVEIPRAAWWLILNGIILNVRPRRSAKLYEQVWTEEGSPLLVIGRRQAEGVATRLSERLPGPVKVELAMRYGQPSIESGLMRLREAGARRILVLPLYPQYSGSTGGSTFDQVSRVLRRWRWVPGLRFVSDYHSDAGYLDALAESVRAYWDQHGRGSKLLMSFHGVPKRYLLAGDPYHCQCHATGRQLAERLGLKEGEWVVTFQSRFGKAEWLKPYTDMTVKALGEEKLGRLDVVCPGFSADCLETIEEIAGENREIFQHAGGGEFHYIPALNDNPDHLDALADLVLRNVQGWPEANPGYDATARQSAAEASRARALGMGAKD.

Positions 210 and 291 each coordinate Fe cation.

This sequence belongs to the ferrochelatase family.

It is found in the cytoplasm. The enzyme catalyses heme b + 2 H(+) = protoporphyrin IX + Fe(2+). The protein operates within porphyrin-containing compound metabolism; protoheme biosynthesis; protoheme from protoporphyrin-IX: step 1/1. Its function is as follows. Catalyzes the ferrous insertion into protoporphyrin IX. The sequence is that of Ferrochelatase from Thioalkalivibrio sulfidiphilus (strain HL-EbGR7).